The chain runs to 317 residues: Melanocyte-stimulating hormone receptor (317 aa).

Residues 1–37 are Extracellular-facing; the sequence is MPVQGSQRRLLGSLNSTPTATPRLGLAANQTGARCLE. Asn-29 carries an N-linked (GlcNAc...) asparagine glycan. The helical transmembrane segment at 38-63 threads the bilayer; the sequence is VSIPDGLFLSLGLVSLVENVLVVVAI. Residues 64 to 72 are Cytoplasmic-facing; that stretch reads ARNRNLHSP. A helical transmembrane segment spans residues 73-93; sequence MYCFICCLALSDLLVSGSNML. At 94–118 the chain is on the extracellular side; it reads ETAVFLLLEAGALAARAAVVQQLDN. The helical transmembrane segment at 119 to 140 threads the bilayer; the sequence is VIDVITCSSMLSSLCFLGAIAV. Topologically, residues 141–163 are cytoplasmic; it reads DRYISIFYALRYHSIVTLRRARR. The chain crosses the membrane as a helical span at residues 164–183; that stretch reads VVAAIWVASVLFSTLFIAYC. Residues 184 to 191 are Extracellular-facing; that stretch reads DHAAVLLC. A helical membrane pass occupies residues 192–211; it reads LVVFFLAMLVLMAVLYVHML. Residues 212–240 lie on the Cytoplasmic side of the membrane; it reads ARACQHAQGIAQLHKRQRPAHQGVGLKGA. The helical transmembrane segment at 241 to 266 threads the bilayer; that stretch reads ATLTILLGIFFLCWGPFFLHLTLIVL. Over 267 to 279 the chain is Extracellular; that stretch reads CPQHPTCSCIFKN. The helical transmembrane segment at 280–300 threads the bilayer; it reads FNLFLTLIICNAIIDPLIYAF. Topologically, residues 301–317 are cytoplasmic; it reads RSQELRRTLKKVLLCSW. Cys-315 is lipidated: S-palmitoyl cysteine.

This sequence belongs to the G-protein coupled receptor 1 family. In terms of assembly, interacts with MGRN1, but does not undergo MGRN1-mediated ubiquitination; this interaction competes with GNAS-binding and thus inhibits agonist-induced cAMP production. Interacts with OPN3; the interaction results in a decrease in MC1R-mediated cAMP signaling and ultimately a decrease in melanin production in melanocytes.

It localises to the cell membrane. In terms of biological role, receptor for MSH (alpha, beta and gamma) and ACTH. The activity of this receptor is mediated by G proteins which activate adenylate cyclase. Mediates melanogenesis, the production of eumelanin (black/brown) and phaeomelanin (red/yellow), via regulation of cAMP signaling in melanocytes. The polypeptide is Melanocyte-stimulating hormone receptor (MC1R) (Trachypithecus obscurus (Dusky leaf-monkey)).